A 174-amino-acid chain; its full sequence is Late lactation protein B (174 aa).

The first 18 residues, 1–18, serve as a signal peptide directing secretion; it reads MKVLFLTIALSLFSILQA. Cys77 and Cys169 are joined by a disulfide.

The protein belongs to the calycin superfamily. Lipocalin family. As to expression, mammary gland specific. Secreted in milk.

It is found in the secreted. Its function is as follows. Probably serves a role in the transport of a small ligand released during the hydrolysis of milk fat. In Notamacropus eugenii (Tammar wallaby), this protein is Late lactation protein B (LLPB).